A 498-amino-acid polypeptide reads, in one-letter code: ATP synthase subunit beta, chloroplastic (498 aa).

172 to 179 (GGAGVGKT) serves as a coordination point for ATP.

This sequence belongs to the ATPase alpha/beta chains family. As to quaternary structure, F-type ATPases have 2 components, CF(1) - the catalytic core - and CF(0) - the membrane proton channel. CF(1) has five subunits: alpha(3), beta(3), gamma(1), delta(1), epsilon(1). CF(0) has four main subunits: a(1), b(1), b'(1) and c(9-12).

The protein localises to the plastid. The protein resides in the chloroplast thylakoid membrane. The enzyme catalyses ATP + H2O + 4 H(+)(in) = ADP + phosphate + 5 H(+)(out). Produces ATP from ADP in the presence of a proton gradient across the membrane. The catalytic sites are hosted primarily by the beta subunits. The polypeptide is ATP synthase subunit beta, chloroplastic (Pelargonium hortorum (Common geranium)).